The primary structure comprises 362 residues: Probable endopolygalacturonase B (362 aa).

An N-terminal signal peptide occupies residues 1 to 20 (MHFLQNAVVAATMGAALAAA). A propeptide spanning residues 21-25 (APLEK) is cleaved from the precursor. Cysteine 28 and cysteine 43 are joined by a disulfide. PbH1 repeat units lie at residues 155–184 (ADHL…DIGQ), 185–206 (STYI…AINS), 207–227 (GEHI…SIGS), 236–257 (VNDV…RIKT), 265–287 (VENV…VVEQ), and 299–344 (TNGV…DVTG). The active-site Proton donor is the aspartate 199. A disulfide bond links cysteine 201 and cysteine 217. Histidine 221 is a catalytic residue. The cysteines at positions 327 and 332 are disulfide-linked. An N-linked (GlcNAc...) asparagine glycan is attached at asparagine 334. Cysteines 351 and 360 form a disulfide.

Belongs to the glycosyl hydrolase 28 family.

It is found in the secreted. The catalysed reaction is (1,4-alpha-D-galacturonosyl)n+m + H2O = (1,4-alpha-D-galacturonosyl)n + (1,4-alpha-D-galacturonosyl)m.. Involved in maceration and soft-rotting of plant tissue. Hydrolyzes the 1,4-alpha glycosidic bonds of de-esterified pectate in the smooth region of the plant cell wall. The chain is Probable endopolygalacturonase B (pgaB) from Aspergillus niger (strain ATCC MYA-4892 / CBS 513.88 / FGSC A1513).